The following is a 704-amino-acid chain: Elongation factor G (704 aa).

The tr-type G domain occupies 8–291 (DKVRNIGIMA…AVVEYLASPV (284 aa)). Residues 17–24 (AHIDAGKT), 90–94 (DTPGH), and 144–147 (NKMD) contribute to the GTP site.

It belongs to the TRAFAC class translation factor GTPase superfamily. Classic translation factor GTPase family. EF-G/EF-2 subfamily.

Its subcellular location is the cytoplasm. Functionally, catalyzes the GTP-dependent ribosomal translocation step during translation elongation. During this step, the ribosome changes from the pre-translocational (PRE) to the post-translocational (POST) state as the newly formed A-site-bound peptidyl-tRNA and P-site-bound deacylated tRNA move to the P and E sites, respectively. Catalyzes the coordinated movement of the two tRNA molecules, the mRNA and conformational changes in the ribosome. The protein is Elongation factor G of Chlorobium phaeobacteroides (strain DSM 266 / SMG 266 / 2430).